Reading from the N-terminus, the 338-residue chain is Ferredoxin--NADP reductase (338 aa).

Residues threonine 14, aspartate 33, glutamine 41, tyrosine 46, valine 86, phenylalanine 120, aspartate 284, and threonine 325 each contribute to the FAD site.

Belongs to the ferredoxin--NADP reductase type 2 family. Homodimer. FAD serves as cofactor.

It carries out the reaction 2 reduced [2Fe-2S]-[ferredoxin] + NADP(+) + H(+) = 2 oxidized [2Fe-2S]-[ferredoxin] + NADPH. This is Ferredoxin--NADP reductase from Pelagibacter ubique (strain HTCC1062).